The sequence spans 300 residues: Cation-efflux pump FieF (300 aa).

The next 4 helical transmembrane spans lie at 11 to 31 (LAAV…VFAW), 40 to 60 (LASL…LLVV), 81 to 101 (LAAL…ILTG), and 114 to 134 (PEVG…LVSF). Residues D45 and D49 each contribute to the Zn(2+) site. Residues H153 and D157 each coordinate Zn(2+). 2 helical membrane passes run 156 to 176 (SDLL…KGIT) and 182 to 202 (FALG…YDAV).

Belongs to the cation diffusion facilitator (CDF) transporter (TC 2.A.4) family. FieF subfamily. As to quaternary structure, homodimer.

The protein resides in the cell inner membrane. It catalyses the reaction Zn(2+)(in) + H(+)(out) = Zn(2+)(out) + H(+)(in). The catalysed reaction is Cd(2+)(in) + H(+)(out) = Cd(2+)(out) + H(+)(in). The enzyme catalyses Fe(2+)(in) + H(+)(out) = Fe(2+)(out) + H(+)(in). Its function is as follows. Divalent metal cation transporter which exports Zn(2+), Cd(2+) and possibly Fe(2+). May be involved in zinc and iron detoxification by efflux. This Pectobacterium atrosepticum (strain SCRI 1043 / ATCC BAA-672) (Erwinia carotovora subsp. atroseptica) protein is Cation-efflux pump FieF.